We begin with the raw amino-acid sequence, 192 residues long: Xanthine phosphoribosyltransferase (192 aa).

Residues L20 and T26 each contribute to the xanthine site. 5-phospho-alpha-D-ribose 1-diphosphate is bound at residue 127-131; that stretch reads ANGQA. K155 contacts xanthine.

Belongs to the purine/pyrimidine phosphoribosyltransferase family. Xpt subfamily. In terms of assembly, homodimer.

Its subcellular location is the cytoplasm. The enzyme catalyses XMP + diphosphate = xanthine + 5-phospho-alpha-D-ribose 1-diphosphate. It participates in purine metabolism; XMP biosynthesis via salvage pathway; XMP from xanthine: step 1/1. Its function is as follows. Converts the preformed base xanthine, a product of nucleic acid breakdown, to xanthosine 5'-monophosphate (XMP), so it can be reused for RNA or DNA synthesis. The polypeptide is Xanthine phosphoribosyltransferase (Streptococcus thermophilus).